Reading from the N-terminus, the 148-residue chain is Probable transcriptional regulator SyrB (148 aa).

Positions 1–58 (MADESNTGPVAAAEAVAETQAPAGKRKSSSRRQRTAAGQVAESKTTAKPKRYSETERA) are disordered. Positions 7 to 23 (TGPVAAAEAVAETQAPA) are enriched in low complexity. Residues 24 to 34 (GKRKSSSRRQR) are compositionally biased toward basic residues.

The protein belongs to the SyrB family.

Functionally, responsible for the repression of SyrM activity. The protein is Probable transcriptional regulator SyrB (syrB) of Sinorhizobium fredii (strain NBRC 101917 / NGR234).